Here is a 1555-residue protein sequence, read N- to C-terminus: Regulating synaptic membrane exocytosis protein 2 (1555 aa).

Residues 1–35 (MSAPLGPRGRPAPTPAASQPPPQPEMPDLSHLTEE) are disordered. The segment covering 10-25 (RPAPTPAASQPPPQPE) has biased composition (pro residues). The RabBD domain occupies 26–154 (MPDLSHLTEE…TKSGAWFYNS (129 aa)). The FYVE-type zinc finger occupies 86 to 142 (KGDAPTCGICHKTKFADGCGHNCSYCQTKFCARCGGRVSLRSNKVMWVCNLCRKQQE). 8 residues coordinate Zn(2+): cysteine 92, cysteine 95, cysteine 108, cysteine 111, cysteine 116, cysteine 119, cysteine 134, and cysteine 137. Residues 154–163 (SGSNTPQQPD) show a composition bias toward polar residues. The tract at residues 154–530 (SGSNTPQQPD…STPEYTSCDD (377 aa)) is disordered. Basic and acidic residues predominate over residues 170 to 185 (LRSEEAPQEKKAKLHE). Residues 259–268 (YVPSDSTMPR) are compositionally biased toward polar residues. Basic and acidic residues-rich tracts occupy residues 287–298 (EPDHLNYRDSNR), 317–335 (RDEY…RYRS), 351–370 (EQMR…RHSD), and 379–403 (EDSR…RRAA). A Phosphoserine modification is found at serine 369. Polar residues predominate over residues 418–432 (AQGQSSYPQRTTNHS). Over residues 444 to 461 (DRPELRRADSLRKQHHLD) the composition is skewed to basic and acidic residues. Polar residues predominate over residues 479 to 490 (RNDSLSSDQSES). Residues 497-506 (RPHKSKKGGK) are compositionally biased toward basic residues. The region spanning 590 to 676 (DGSVPRDSGA…EPQVELVVSR (87 aa)) is the PDZ domain. At threonine 611 the chain carries Phosphothreonine. The tract at residues 682-716 (PRIPDSTHAQLESSSSSFESQKMDRPSISVTSPMS) is disordered. Phosphoserine occurs at positions 713 and 716. The C2 1 domain maps to 743 to 866 (FVPRVQIKLW…ALLDDEPHWY (124 aa)). Disordered regions lie at residues 877 to 913 (PLPH…VSDY), 935 to 1145 (STLS…KRNS), 1180 to 1207 (YRSG…DVSA), 1268 to 1288 (LEKN…TSGK), and 1307 to 1332 (KSRS…QRST). Polar residues predominate over residues 935–953 (STLSVPEQVMSSNHCSPSG). Composition is skewed to basic and acidic residues over residues 996–1014 (RMDR…RDSH) and 1025–1071 (QTSE…ERAD). The span at 1092–1114 (ALSRSHPRTGSVQTSPSSTPVTG) shows a compositional bias: low complexity. Serine 1106 bears the Phosphoserine mark. 2 stretches are compositionally biased toward basic and acidic residues: residues 1128–1141 (TLER…DSTR) and 1180–1190 (YRSGWDPHRGA). Residues serine 1200 and serine 1276 each carry the phosphoserine modification. In terms of domain architecture, C2 2 spans 1401 to 1519 (AMGDIQVGMM…ELSNMVIGWF (119 aa)). Residues serine 1540 and serine 1543 each carry the phosphoserine modification.

Heterodimer with PCLO. Part of a ternary complex involving PCLO and EPAC2. Interacts with RAB3C, RAB3D and RAB26. Binds RAB3A and RAB3B that have been activated by GTP-binding. Interacts with TSPOAP1 and RIMBP2. Interacts with PPFIA3 and PPFIA4. Interacts via its zinc finger with the first C2 domain of UNC13A. Forms a complex consisting of UNC13A, RIMS2 and RAB3A. Highly expressed in hippocampus, brain cortex, cerebellum and olfactory bulb. Detected at intermediate levels in midbrain, hindbrain and spinal cord, and at low levels in testis.

It is found in the cell membrane. Its subcellular location is the synapse. It localises to the presynaptic cell membrane. In terms of biological role, rab effector involved in exocytosis. May act as scaffold protein. Plays a role in dendrite formation by melanocytes. In Rattus norvegicus (Rat), this protein is Regulating synaptic membrane exocytosis protein 2 (Rims2).